The following is a 306-amino-acid chain: Ribosomal RNA small subunit methyltransferase H (306 aa).

S-adenosyl-L-methionine contacts are provided by residues 33–35, D51, F82, D96, and Q103; that span reads GGY.

Belongs to the methyltransferase superfamily. RsmH family.

The protein localises to the cytoplasm. It carries out the reaction cytidine(1402) in 16S rRNA + S-adenosyl-L-methionine = N(4)-methylcytidine(1402) in 16S rRNA + S-adenosyl-L-homocysteine + H(+). Specifically methylates the N4 position of cytidine in position 1402 (C1402) of 16S rRNA. The chain is Ribosomal RNA small subunit methyltransferase H from Rickettsia akari (strain Hartford).